The primary structure comprises 116 residues: Hydrogenase maturation factor HypA (116 aa).

H2 contributes to the Ni(2+) binding site. C73, C76, C90, and C93 together coordinate Zn(2+).

It belongs to the HypA/HybF family.

Functionally, involved in the maturation of [NiFe] hydrogenases. Required for nickel insertion into the metal center of the hydrogenase. In Escherichia coli O157:H7, this protein is Hydrogenase maturation factor HypA.